A 98-amino-acid chain; its full sequence is Integration host factor subunit alpha (98 aa).

The protein belongs to the bacterial histone-like protein family. As to quaternary structure, heterodimer of an alpha and a beta chain.

Functionally, this protein is one of the two subunits of integration host factor, a specific DNA-binding protein that functions in genetic recombination as well as in transcriptional and translational control. This is Integration host factor subunit alpha from Idiomarina loihiensis (strain ATCC BAA-735 / DSM 15497 / L2-TR).